A 117-amino-acid polypeptide reads, in one-letter code: Large ribosomal subunit protein bL20c (117 aa).

This sequence belongs to the bacterial ribosomal protein bL20 family.

The protein localises to the plastid. Its subcellular location is the chloroplast. In terms of biological role, binds directly to 23S ribosomal RNA and is necessary for the in vitro assembly process of the 50S ribosomal subunit. It is not involved in the protein synthesizing functions of that subunit. The chain is Large ribosomal subunit protein bL20c from Arabis hirsuta (Hairy rock-cress).